The primary structure comprises 454 residues: Putative F-box/LRR-repeat protein At3g58880 (454 aa).

The 47-residue stretch at 2-48 (VDLVSSLPDDLLGHILSLLTTKEAALTSILSKRWRYLIAFVPYLEFD) folds into the F-box domain. 7 LRR repeats span residues 77–102 (LALH…DLLN), 144–168 (SGCR…TLDS), 169–194 (VSWS…NLAN), 214–240 (IKSV…NYTA), 270–301 (LVSV…YLSP), 303–327 (TLQV…VIES), and 328–353 (SMDI…VIKG).

This Arabidopsis thaliana (Mouse-ear cress) protein is Putative F-box/LRR-repeat protein At3g58880.